The primary structure comprises 296 residues: ADP-dependent (S)-NAD(P)H-hydrate dehydratase (296 aa).

The 275-residue stretch at 18–292 (TALRFPHVFK…PAARWLRNRI (275 aa)) folds into the YjeF C-terminal domain. (6S)-NADPHX contacts are provided by A53, G113, and H165. Residues 202–206 (KGHKT) and G231 contribute to the AMP site. A (6S)-NADPHX-binding site is contributed by D232.

It belongs to the NnrD/CARKD family. In terms of assembly, homotetramer. Requires Mg(2+) as cofactor.

The enzyme catalyses (6S)-NADHX + ADP = AMP + phosphate + NADH + H(+). It catalyses the reaction (6S)-NADPHX + ADP = AMP + phosphate + NADPH + H(+). Its function is as follows. Catalyzes the dehydration of the S-form of NAD(P)HX at the expense of ADP, which is converted to AMP. Together with NAD(P)HX epimerase, which catalyzes the epimerization of the S- and R-forms, the enzyme allows the repair of both epimers of NAD(P)HX, a damaged form of NAD(P)H that is a result of enzymatic or heat-dependent hydration. The polypeptide is ADP-dependent (S)-NAD(P)H-hydrate dehydratase (Neisseria meningitidis serogroup B (strain ATCC BAA-335 / MC58)).